Reading from the N-terminus, the 283-residue chain is Pantothenate synthetase (283 aa).

30 to 37 (MGTLHDGH) is a binding site for ATP. The active-site Proton donor is H37. Q61 lines the (R)-pantoate pocket. Position 61 (Q61) interacts with beta-alanine. Residue 148 to 151 (GLKD) coordinates ATP. Residue Q154 participates in (R)-pantoate binding. 185 to 188 (MSSR) provides a ligand contact to ATP.

Belongs to the pantothenate synthetase family. Homodimer.

The protein resides in the cytoplasm. It catalyses the reaction (R)-pantoate + beta-alanine + ATP = (R)-pantothenate + AMP + diphosphate + H(+). It participates in cofactor biosynthesis; (R)-pantothenate biosynthesis; (R)-pantothenate from (R)-pantoate and beta-alanine: step 1/1. Catalyzes the condensation of pantoate with beta-alanine in an ATP-dependent reaction via a pantoyl-adenylate intermediate. This chain is Pantothenate synthetase, found in Leptospira biflexa serovar Patoc (strain Patoc 1 / Ames).